A 605-amino-acid polypeptide reads, in one-letter code: YTH domain-containing protein ECT4 (605 aa).

Disordered regions lie at residues 249–274 (GVAS…SNSH) and 357–384 (ELNR…QTFD). The segment covering 256-274 (KANNNVPATRNQNSSSNSH) has biased composition (polar residues). Over residues 368 to 383 (KATEEVSSEEVKKQTF) the composition is skewed to basic and acidic residues. The 138-residue stretch at 414 to 551 (AKFFIIKSYS…EQGLKVVKIF (138 aa)) folds into the YTH domain. RNA-binding positions include 420–422 (KSY), D426, 436–437 (WA), N469, W493, W498, and W506. The segment at 580–605 (KQQQSQKQVWEGKTNDEKPGTVDSTM) is disordered.

In terms of tissue distribution, expressed in the shoot apex, at the sites of leaf formation, and in emerging leaves.

The protein localises to the cytoplasm. Functionally, specifically recognizes and binds N6-methyladenosine (m6A)-containing RNAs, and regulates mRNA stability. M6A is a modification present at internal sites of mRNAs and some non-coding RNAs and plays a role in mRNA stability and processing. Required for the correct timing of leaf formation and normal leaf morphology. This chain is YTH domain-containing protein ECT4, found in Arabidopsis thaliana (Mouse-ear cress).